We begin with the raw amino-acid sequence, 1080 residues long: Protein transport protein SEC24 C (1080 aa).

The span at 1 to 10 shows a compositional bias: pro residues; sequence MVAPVPPGAP. 3 disordered regions span residues 1–189, 201–220, and 316–367; these read MVAP…SGMI, GSGG…TTPQ, and TAMG…SDYV. The span at 12–43 shows a compositional bias: polar residues; sequence PNSQQNSGPPNFYPGSQGNSNALADNMQNLSL. Pro residues predominate over residues 45 to 70; it reads RPPPMMPGSGPRPPPPFGQSPQPFPQ. Composition is skewed to low complexity over residues 71–84, 142–160, and 178–189; these read QSPS…GPSP, PAAS…SVAA, and GSGMSMPPSGMI. Positions 340–356 are enriched in polar residues; the sequence is GSSSSPTVFETRQSNQA. Zn(2+) is bound by residues C430, C433, C452, and C455. Positions 430-455 are zinc finger-like; that stretch reads CSRCKGYINPFMKFIDQGRKFICNFC.

The protein belongs to the SEC23/SEC24 family. SEC24 subfamily. Component of the coat protein complex II (COPII), composed of at least five proteins: the Sec23/24 complex, the Sec13/31 complex and Sar1. In terms of tissue distribution, mainly expressed at low levels in pollen, leaves, roots and stems.

The protein resides in the cytoplasmic vesicle. It localises to the COPII-coated vesicle membrane. The protein localises to the endoplasmic reticulum membrane. Its subcellular location is the golgi apparatus membrane. Functionally, component of the coat protein complex II (COPII), that covers ER-derived vesicles involved in transport from the endoplasmic reticulum to the Golgi apparatus. COPII is composed of at least five proteins: the SEC23/24 complex, the SEC13/31 complex, and the protein SAR1. Acts in the cytoplasm to promote the transport of secretory, plasma membrane, and vacuolar proteins from the endoplasmic reticulum to the Golgi complex. This chain is Protein transport protein SEC24 C, found in Arabidopsis thaliana (Mouse-ear cress).